The following is a 391-amino-acid chain: Na(+)/H(+) antiporter NhaA (391 aa).

12 consecutive transmembrane segments (helical) span residues 9-29 (FQLE…ALII), 36-56 (YLYS…LNIA), 59-79 (LLLW…GLEV), 95-115 (ILPA…YWFI), 123-143 (VAGW…VLAL), 154-174 (LFLM…IALF), 177-197 (GTLS…LIAM), 213-235 (LILW…ALAL), 259-279 (WVAY…SLAG), 293-313 (IAVG…WLAV), 329-349 (ILGV…VGSL), and 364-384 (MGIL…TAMA).

It belongs to the NhaA Na(+)/H(+) (TC 2.A.33) antiporter family.

It is found in the cell inner membrane. It carries out the reaction Na(+)(in) + 2 H(+)(out) = Na(+)(out) + 2 H(+)(in). In terms of biological role, na(+)/H(+) antiporter that extrudes sodium in exchange for external protons. This Pseudomonas putida (strain GB-1) protein is Na(+)/H(+) antiporter NhaA.